The primary structure comprises 257 residues: UPF0246 protein lpl1317 (257 aa).

It belongs to the UPF0246 family.

In Legionella pneumophila (strain Lens), this protein is UPF0246 protein lpl1317.